We begin with the raw amino-acid sequence, 1216 residues long: Probable cation-transporting ATPase 13A5 (1216 aa).

5 helical membrane passes run 33–53, 198–218, 222–242, 401–421, and 433–453; these read RALC…MFYW, LLVK…LTLW, GYIE…VLSV, FMVF…GVYM, and MALI…LTIG. Asp486 (4-aspartylphosphate intermediate) is an active-site residue. Asn650 and Asn817 each carry an N-linked (GlcNAc...) asparagine glycan. The Mg(2+) site is built by Asp848 and Asp852. Transmembrane regions (helical) follow at residues 896-916, 933-950, 971-991, 1040-1060, 1075-1095, and 1113-1133; these read ALVS…IQFI, YLLQ…TMSI, LLLS…CTFL, FEGT…AFIF, LFSL…FCDF, and VSIL…EDAV.

It belongs to the cation transport ATPase (P-type) (TC 3.A.3) family. Type V subfamily. As to expression, specifically expressed in brain and stomach.

The protein resides in the membrane. It catalyses the reaction ATP + H2O = ADP + phosphate + H(+). This chain is Probable cation-transporting ATPase 13A5 (Atp13a5), found in Mus musculus (Mouse).